We begin with the raw amino-acid sequence, 764 residues long: 5-methyltetrahydropteroyltriglutamate--homocysteine methyltransferase (764 aa).

Residues 16–19 and lysine 121 contribute to the 5-methyltetrahydropteroyltri-L-glutamate site; that span reads RELK. Residues 440–442 and glutamate 493 contribute to the L-homocysteine site; that span reads IGS. L-methionine contacts are provided by residues 440-442 and glutamate 493; that span reads IGS. 5-methyltetrahydropteroyltri-L-glutamate is bound by residues 524 to 525 and tryptophan 570; that span reads RC. L-homocysteine is bound at residue aspartate 608. Aspartate 608 contacts L-methionine. 5-methyltetrahydropteroyltri-L-glutamate is bound at residue glutamate 614. Zn(2+) contacts are provided by histidine 650, cysteine 652, and glutamate 674. Histidine 703 serves as the catalytic Proton donor. Cysteine 735 contacts Zn(2+).

This sequence belongs to the vitamin-B12 independent methionine synthase family. Zn(2+) serves as cofactor.

It catalyses the reaction 5-methyltetrahydropteroyltri-L-glutamate + L-homocysteine = tetrahydropteroyltri-L-glutamate + L-methionine. The protein operates within amino-acid biosynthesis; L-methionine biosynthesis via de novo pathway; L-methionine from L-homocysteine (MetE route): step 1/1. Catalyzes the transfer of a methyl group from 5-methyltetrahydrofolate to homocysteine resulting in methionine formation. The polypeptide is 5-methyltetrahydropteroyltriglutamate--homocysteine methyltransferase (Burkholderia cenocepacia (strain ATCC BAA-245 / DSM 16553 / LMG 16656 / NCTC 13227 / J2315 / CF5610) (Burkholderia cepacia (strain J2315))).